A 526-amino-acid polypeptide reads, in one-letter code: ATP synthase subunit alpha (526 aa).

174 to 181 serves as a coordination point for ATP; it reads GDRKTGKT. A compositionally biased stretch (basic and acidic residues) spans 505–520; sequence FEPARSEVKVETRPQE. The tract at residues 505–526 is disordered; it reads FEPARSEVKVETRPQEEEGEEG.

This sequence belongs to the ATPase alpha/beta chains family. As to quaternary structure, F-type ATPases have 2 components, CF(1) - the catalytic core - and CF(0) - the membrane proton channel. CF(1) has five subunits: alpha(3), beta(3), gamma(1), delta(1), epsilon(1). CF(0) has three main subunits: a(1), b(2) and c(9-12). The alpha and beta chains form an alternating ring which encloses part of the gamma chain. CF(1) is attached to CF(0) by a central stalk formed by the gamma and epsilon chains, while a peripheral stalk is formed by the delta and b chains.

It localises to the cell membrane. It catalyses the reaction ATP + H2O + 4 H(+)(in) = ADP + phosphate + 5 H(+)(out). Produces ATP from ADP in the presence of a proton gradient across the membrane. The alpha chain is a regulatory subunit. The polypeptide is ATP synthase subunit alpha (Rubrobacter xylanophilus (strain DSM 9941 / JCM 11954 / NBRC 16129 / PRD-1)).